The sequence spans 340 residues: Selenide, water dikinase (340 aa).

Sec-17 is a catalytic residue. A non-standard amino acid (selenocysteine) is located at residue Sec-17. ATP-binding positions include Lys-20 and 45 to 47 (NNE). Asp-48 contacts Mg(2+). ATP is bound by residues Asp-65, Asp-88, and 136 to 138 (GHT). Asp-88 provides a ligand contact to Mg(2+). Residue Asp-224 coordinates Mg(2+).

It belongs to the selenophosphate synthase 1 family. Class I subfamily. As to quaternary structure, homodimer. The cofactor is Mg(2+).

It carries out the reaction hydrogenselenide + ATP + H2O = selenophosphate + AMP + phosphate + 2 H(+). Functionally, synthesizes selenophosphate from selenide and ATP. This Campylobacter jejuni (strain RM1221) protein is Selenide, water dikinase.